The following is a 447-amino-acid chain: Argininosuccinate synthase (447 aa).

ATP-binding positions include 17–25 and A43; that span reads AFSGGLDTS. Y99 is an L-citrulline binding site. ATP contacts are provided by G129 and T131. T131, N135, and D136 together coordinate L-aspartate. Position 135 (N135) interacts with L-citrulline. An ATP-binding site is contributed by D136. R139 and S192 together coordinate L-citrulline. D194 is a binding site for ATP. The L-citrulline site is built by T201, E203, and E280.

Belongs to the argininosuccinate synthase family. Type 2 subfamily. Homotetramer.

It is found in the cytoplasm. It catalyses the reaction L-citrulline + L-aspartate + ATP = 2-(N(omega)-L-arginino)succinate + AMP + diphosphate + H(+). Its pathway is amino-acid biosynthesis; L-arginine biosynthesis; L-arginine from L-ornithine and carbamoyl phosphate: step 2/3. This is Argininosuccinate synthase from Salmonella paratyphi B (strain ATCC BAA-1250 / SPB7).